The sequence spans 359 residues: Type-1 angiotensin II receptor (359 aa).

Residues 1–25 lie on the Extracellular side of the membrane; it reads MALNSSADDGIKRIQDDCPKAGRHS. An N-linked (GlcNAc...) asparagine glycan is attached at N4. Residues Q15 and D17 each contribute to the angiotensin II site. 2 disulfide bridges follow: C18/C274 and C101/C180. The helical transmembrane segment at 26 to 55 threads the bilayer; that stretch reads YIFVMIPTLYSIIFVVGIFGNSLVVIVIYF. Over 56-61 the chain is Cytoplasmic; it reads YMKLKT. Residues 62–89 form a helical membrane-spanning segment; sequence VASVFLLNLALADLCFLLTLPVWAVYTA. Residues 90–98 are Extracellular-facing; the sequence is MEYRWPFGN. Residues 99–125 traverse the membrane as a helical segment; it reads HLCKIASAGISFNLYASVFLLTCLSID. Residues 126 to 141 are Cytoplasmic-facing; it reads RYLAIVHPMKSRLRRT. A helical membrane pass occupies residues 142–165; sequence MLVAKVTCVVIWLLAGLASLPAVI. Over 166-190 the chain is Extracellular; the sequence is HRNVYFIENTNSTVCAFHYESQNST. R167 serves as a coordination point for angiotensin II. The N-linked (GlcNAc...) asparagine glycan is linked to N176. F182, H183, and Y184 together coordinate angiotensin II. Residue N188 is glycosylated (N-linked (GlcNAc...) asparagine). The helical transmembrane segment at 191–216 threads the bilayer; that stretch reads LPVGLGLTKNILGFMFPFLIILTSYT. K199 lines the angiotensin II pocket. At 217-239 the chain is on the cytoplasmic side; the sequence is LIWKALKKAYEIQKNKPRNDDIF. The helical transmembrane segment at 240 to 268 threads the bilayer; sequence RIIMAIVLFFFFSWIPHQIFTFLDVLIQL. At 269-278 the chain is on the extracellular side; that stretch reads GVIRDCKIAD. Residues 279–304 traverse the membrane as a helical segment; sequence VVDTAMPITICIAYFNNCLNPLFYGF. The Cytoplasmic portion of the chain corresponds to 305–359; it reads LGKKFKKYFLQLLKYIPPKAKSHSSLSTKMSTLSYRPSDNMNSSAKKPASCFEVE. C355 carries the S-palmitoyl cysteine lipid modification.

The protein belongs to the G-protein coupled receptor 1 family. Interacts with MAS1. Interacts with ARRB1. Interacts with FLNA (via filamin repeat 21); increases PKA-mediated phosphorylation of FLNA. Post-translationally, C-terminal Ser or Thr residues may be phosphorylated.

The protein localises to the cell membrane. Its function is as follows. Receptor for angiotensin II, a vasoconstricting peptide, which acts as a key regulator of blood pressure and sodium retention by the kidney. The activated receptor in turn couples to G-alpha proteins G(q) (GNAQ, GNA11, GNA14 or GNA15) and thus activates phospholipase C and increases the cytosolic Ca(2+) concentrations, which in turn triggers cellular responses such as stimulation of protein kinase C. This is Type-1 angiotensin II receptor (AGTR1) from Meriones unguiculatus (Mongolian jird).